Consider the following 109-residue polypeptide: Probable gas vesicle protein J1 (109 aa).

It belongs to the gas vesicle GvpA family. Interacts with GvpA.

The protein localises to the gas vesicle. Functionally, a minor component of the gas vesicle, might be involved in nucleating gas vesicle formation. Gas vesicles (GV) are hollow, gas filled proteinaceous nanostructures. It is not clear what function GVs perform in soil bacteria. This is Probable gas vesicle protein J1 (gvpJ1) from Streptomyces coelicolor (strain ATCC BAA-471 / A3(2) / M145).